We begin with the raw amino-acid sequence, 812 residues long: Chromosome alignment-maintaining phosphoprotein 1 (812 aa).

Methionine 1 carries the post-translational modification N-acetylmethionine. The span at alanine 86–proline 105 shows a compositional bias: basic and acidic residues. Disordered regions lie at residues alanine 86–proline 124 and lysine 136–arginine 546. A phosphoserine mark is found at serine 87, serine 108, serine 173, serine 184, serine 204, serine 214, and serine 217. Residues valine 202–valine 213 are compositionally biased toward pro residues. A compositionally biased stretch (polar residues) spans alanine 220–phenylalanine 233. Phosphoserine is present on residues serine 244, serine 247, serine 253, serine 264, serine 275, serine 282, serine 286, serine 297, serine 308, serine 319, serine 344, serine 355, serine 376, serine 382, and serine 386. The tract at residues alanine 271–lysine 490 is mediates interaction with MAD2L2. Residues serine 284 to serine 297 show a composition bias toward pro residues. Pro residues predominate over residues proline 336–proline 361. Over residues proline 363–serine 392 the composition is skewed to low complexity. Position 403 is a phosphothreonine (threonine 403). Serine 405, serine 416, serine 427, serine 432, serine 436, serine 443, serine 445, and serine 452 each carry phosphoserine. Residues leucine 451–glutamine 590 are mediates localization to the spindle and the kinetochore and is required for the attachment of spindle microtubules to the kinetochore. Position 458 is a phosphothreonine (threonine 458). Phosphoserine is present on residues serine 459, serine 462, serine 472, and serine 476. N6-acetyllysine; alternate is present on lysine 490. Lysine 490 participates in a covalent cross-link: Glycyl lysine isopeptide (Lys-Gly) (interchain with G-Cter in SUMO2); alternate. Low complexity predominate over residues proline 499–serine 512. Phosphoserine is present on residues serine 507, serine 512, and serine 542. A Glycyl lysine isopeptide (Lys-Gly) (interchain with G-Cter in SUMO2) cross-link involves residue lysine 565. Phosphoserine occurs at positions 572 and 603. The tract at residues lysine 591–isoleucine 812 is mediates localization to the chromosome and the spindle and negatively regulates chromosome alignment. Residue lysine 606 forms a Glycyl lysine isopeptide (Lys-Gly) (interchain with G-Cter in SUMO2) linkage. Residues serine 615, serine 626, serine 627, and serine 632 each carry the phosphoserine modification. A Glycyl lysine isopeptide (Lys-Gly) (interchain with G-Cter in SUMO2) cross-link involves residue lysine 638. Phosphoserine occurs at positions 651, 652, and 653. A Glycyl lysine isopeptide (Lys-Gly) (interchain with G-Cter in SUMO2) cross-link involves residue lysine 670. Residue serine 675 is modified to Phosphoserine. A Glycyl lysine isopeptide (Lys-Gly) (interchain with G-Cter in SUMO2) cross-link involves residue lysine 689. Position 736 is a phosphoserine (serine 736). The segment at tyrosine 738 to histidine 760 adopts a C2H2-type zinc-finger fold.

In terms of assembly, interacts with MAD2L2. Interacts with POGZ, CBX1, CBX3 and CBX5. Post-translationally, phosphorylated by CDK1. Mitotic phosphorylation is required for the attachment of spindle microtubules to the kinetochore.

It localises to the nucleus. Its subcellular location is the chromosome. It is found in the centromere. The protein localises to the kinetochore. The protein resides in the cytoplasm. It localises to the cytoskeleton. Its subcellular location is the spindle. Its function is as follows. Required for proper alignment of chromosomes at metaphase and their accurate segregation during mitosis. Involved in the maintenance of spindle microtubules attachment to the kinetochore during sister chromatid biorientation. May recruit CENPE and CENPF to the kinetochore. This chain is Chromosome alignment-maintaining phosphoprotein 1 (CHAMP1), found in Homo sapiens (Human).